A 201-amino-acid polypeptide reads, in one-letter code: Large ribosomal subunit protein bL25 (201 aa).

It belongs to the bacterial ribosomal protein bL25 family. CTC subfamily. As to quaternary structure, part of the 50S ribosomal subunit; part of the 5S rRNA/L5/L18/L25 subcomplex. Contacts the 5S rRNA. Binds to the 5S rRNA independently of L5 and L18.

In terms of biological role, this is one of the proteins that binds to the 5S RNA in the ribosome where it forms part of the central protuberance. This chain is Large ribosomal subunit protein bL25, found in Burkholderia multivorans (strain ATCC 17616 / 249).